A 436-amino-acid polypeptide reads, in one-letter code: Methionine aminopeptidase 2 (436 aa).

The segment at 1–61 (MSEIQPKTEV…KKKKAAPVAS (61 aa)) is disordered. Residues 16-26 (EEEEESDDEED) show a composition bias toward acidic residues. Positions 44 to 56 (KKKKKKNKKKKKA) are enriched in basic residues. Substrate is bound at residue His-191. Residues Asp-211, Asp-222, and His-291 each coordinate a divalent metal cation. Residue His-299 coordinates substrate. 2 residues coordinate a divalent metal cation: Glu-324 and Glu-417.

Belongs to the peptidase M24A family. Methionine aminopeptidase eukaryotic type 2 subfamily. Requires Co(2+) as cofactor. Zn(2+) is required as a cofactor. It depends on Mn(2+) as a cofactor. The cofactor is Fe(2+).

It localises to the cytoplasm. It catalyses the reaction Release of N-terminal amino acids, preferentially methionine, from peptides and arylamides.. Cotranslationally removes the N-terminal methionine from nascent proteins. The N-terminal methionine is often cleaved when the second residue in the primary sequence is small and uncharged (Met-Ala-, Cys, Gly, Pro, Ser, Thr, or Val). In Dictyostelium discoideum (Social amoeba), this protein is Methionine aminopeptidase 2 (metap2).